A 260-amino-acid chain; its full sequence is CD40 ligand (260 aa).

Residues 1-22 are Cytoplasmic-facing; it reads MIETYSQTAPRSVAPGPPVSMK. A helical; Signal-anchor for type II membrane protein transmembrane segment spans residues 23–46; the sequence is IFMYLLTVFLITQMIGSALFAVYL. Residues 47 to 260 are Extracellular-facing; that stretch reads HRRLDKIEDE…GFTSFGLLKL (214 aa). The THD domain occupies 121–260; the sequence is VAAHVISEAS…GFTSFGLLKL (140 aa). Cys-177 and Cys-217 are disulfide-bonded. Asn-239 carries an N-linked (GlcNAc...) asparagine glycan.

This sequence belongs to the tumor necrosis factor family. Homotrimer. Interacts with CD28. CD40 ligand, soluble form: Exists as either a monomer or a homotrimer. Forms a ternary complex between CD40 and integrins for CD40-CD40LG signaling. In terms of processing, the soluble form derives from the membrane form by proteolytic processing.

The protein localises to the cell membrane. It localises to the cell surface. It is found in the secreted. Cytokine that acts as a ligand to CD40/TNFRSF5. Costimulates T-cell proliferation and cytokine production. Its cross-linking on T-cells generates a costimulatory signal which enhances the production of IL4 and IL10 in conjunction with the TCR/CD3 ligation and CD28 costimulation. Induces the activation of NF-kappa-B. Induces the activation of kinases MAPK8 and PAK2 in T-cells. Mediates B-cell proliferation in the absence of co-stimulus as well as IgE production in the presence of IL4. Involved in immunoglobulin class switching. In terms of biological role, acts as a ligand for integrins, specifically ITGA5:ITGB1 and ITGAV:ITGB3; both integrins and the CD40 receptor are required for activation of CD40-CD40LG signaling, which have cell-type dependent effects, such as B-cell activation, NF-kappa-B signaling and anti-apoptotic signaling. The polypeptide is CD40 ligand (CD40LG) (Felis catus (Cat)).